The following is a 381-amino-acid chain: Cytochrome b (381 aa).

4 helical membrane passes run 33-53 (FGSL…FLAM), 77-98 (WLIR…FLHV), 113-133 (WNIG…GYVL), and 178-198 (FFAL…VHLT). 2 residues coordinate heme b: H83 and H97. Heme b is bound by residues H182 and H196. An a ubiquinone-binding site is contributed by H201. 4 helical membrane-spanning segments follow: residues 226–246 (IKDI…ALFS), 288–308 (LGGV…PFLH), 320–340 (ISQT…WIGG), and 347–367 (FIII…HPMP).

Belongs to the cytochrome b family. The cytochrome bc1 complex contains 11 subunits: 3 respiratory subunits (MT-CYB, CYC1 and UQCRFS1), 2 core proteins (UQCRC1 and UQCRC2) and 6 low-molecular weight proteins (UQCRH/QCR6, UQCRB/QCR7, UQCRQ/QCR8, UQCR10/QCR9, UQCR11/QCR10 and a cleavage product of UQCRFS1). This cytochrome bc1 complex then forms a dimer. It depends on heme b as a cofactor.

It localises to the mitochondrion inner membrane. In terms of biological role, component of the ubiquinol-cytochrome c reductase complex (complex III or cytochrome b-c1 complex) that is part of the mitochondrial respiratory chain. The b-c1 complex mediates electron transfer from ubiquinol to cytochrome c. Contributes to the generation of a proton gradient across the mitochondrial membrane that is then used for ATP synthesis. This chain is Cytochrome b (MT-CYB), found in Sminthopsis youngsoni (Lesser hairy-footed dunnart).